A 299-amino-acid polypeptide reads, in one-letter code: Tyrosine recombinase XerC (299 aa).

The 85-residue stretch at 3–87 folds into the Core-binding (CB) domain; that stretch reads PQCQSYLQQF…AIKQWGEFLL (85 aa). In terms of domain architecture, Tyr recombinase spans 108–287; the sequence is PLPKNIDVDS…DFQHLAKVYD (180 aa). Residues R147, K171, H239, R242, and H265 contribute to the active site. Y274 acts as the O-(3'-phospho-DNA)-tyrosine intermediate in catalysis.

It belongs to the 'phage' integrase family. XerC subfamily. Forms a cyclic heterotetrameric complex composed of two molecules of XerC and two molecules of XerD.

The protein localises to the cytoplasm. Functionally, site-specific tyrosine recombinase, which acts by catalyzing the cutting and rejoining of the recombining DNA molecules. The XerC-XerD complex is essential to convert dimers of the bacterial chromosome into monomers to permit their segregation at cell division. It also contributes to the segregational stability of plasmids. This chain is Tyrosine recombinase XerC, found in Shewanella sp. (strain ANA-3).